The primary structure comprises 332 residues: Beta-ketoacyl-[acyl-carrier-protein] synthase III (332 aa).

Residues C114 and H255 contribute to the active site. The tract at residues 256–260 (QANLR) is ACP-binding. Residue N285 is part of the active site.

It belongs to the thiolase-like superfamily. FabH family. As to quaternary structure, homodimer.

The protein localises to the cytoplasm. It carries out the reaction malonyl-[ACP] + acetyl-CoA + H(+) = 3-oxobutanoyl-[ACP] + CO2 + CoA. It participates in lipid metabolism; fatty acid biosynthesis. In terms of biological role, catalyzes the condensation reaction of fatty acid synthesis by the addition to an acyl acceptor of two carbons from malonyl-ACP. Catalyzes the first condensation reaction which initiates fatty acid synthesis and may therefore play a role in governing the total rate of fatty acid production. Possesses both acetoacetyl-ACP synthase and acetyl transacylase activities. Its substrate specificity determines the biosynthesis of branched-chain and/or straight-chain of fatty acids. The protein is Beta-ketoacyl-[acyl-carrier-protein] synthase III of Sulfurimonas denitrificans (strain ATCC 33889 / DSM 1251) (Thiomicrospira denitrificans (strain ATCC 33889 / DSM 1251)).